A 360-amino-acid polypeptide reads, in one-letter code: N6-Methyl-AMP deaminase (360 aa).

Zn(2+) contacts are provided by H23 and H25. N(6)-methyl-AMP contacts are provided by residues H25, N27, H73, S105–R108, D147, and G180. Residue H207 coordinates Zn(2+). N(6)-methyl-AMP contacts are provided by E210, D292, and D293. E210 serves as the catalytic Proton donor. D292 contributes to the Zn(2+) binding site.

It belongs to the metallo-dependent hydrolases superfamily. Adenosine and AMP deaminases family. Monomer. The cofactor is Zn(2+).

The catalysed reaction is N(6)-methyl-AMP + H2O + H(+) = IMP + methylamine. In terms of biological role, catalyzes the hydrolysis of the free cytosolic methylated adenosine nucleotide N(6)-methyl-AMP (N6-mAMP) to produce inositol monophosphate (IMP) and methylamine. Is required for the catabolism of cytosolic N6-mAMP, which is derived from the degradation of mRNA containing N6-methylated adenine (m6A). The chain is N6-Methyl-AMP deaminase (Mapda) from Mus musculus (Mouse).